The following is a 350-amino-acid chain: GTPase Obg (350 aa).

An Obg domain is found at 1–159; the sequence is MKFLDQAKIY…RWIWLRLKLI (159 aa). Residues 160–328 enclose the OBG-type G domain; sequence ADVGLVGLPN…VLRLLQDRVT (169 aa). GTP is bound by residues 166–173, 191–195, 213–216, 280–283, and 309–311; these read GLPNAGKS, FTTLH, DIPG, NKID, and SGV. Mg(2+) contacts are provided by Ser173 and Thr193. Positions 331 to 350 are disordered; the sequence is REAARDAAPPQAAAGREETA.

The protein belongs to the TRAFAC class OBG-HflX-like GTPase superfamily. OBG GTPase family. Monomer. Mg(2+) is required as a cofactor.

The protein localises to the cytoplasm. In terms of biological role, an essential GTPase which binds GTP, GDP and possibly (p)ppGpp with moderate affinity, with high nucleotide exchange rates and a fairly low GTP hydrolysis rate. Plays a role in control of the cell cycle, stress response, ribosome biogenesis and in those bacteria that undergo differentiation, in morphogenesis control. This chain is GTPase Obg, found in Gluconacetobacter diazotrophicus (strain ATCC 49037 / DSM 5601 / CCUG 37298 / CIP 103539 / LMG 7603 / PAl5).